The following is a 111-amino-acid chain: C-type lectin lectoxin-Enh1 (111 aa).

A signal peptide spans 1–23 (MGQFTVVSLGLLAMFLSLSGAKG). Cys26 and Cys37 form a disulfide bridge. The 76-residue stretch at 33-108 (RNGVCNKLFP…CASLHPFICQ (76 aa)) folds into the C-type lectin domain. Residues 72–74 (EPN) carry the Mannose-binding motif. Ca(2+)-binding residues include Glu80, Asn95, and Asp96. Cys82 and Cys99 are disulfide-bonded.

Belongs to the true venom lectin family. As to expression, expressed by the venom gland.

The protein resides in the secreted. In terms of biological role, mannose-binding lectin which recognizes specific carbohydrate structures and agglutinates a variety of animal cells by binding to cell-surface glycoproteins and glycolipids. May be a calcium-dependent lectin. This is C-type lectin lectoxin-Enh1 from Pseudoferania polylepis (Macleay's water snake).